An 811-amino-acid polypeptide reads, in one-letter code: Lysine-specific histone demethylase 1 homolog 3 (811 aa).

Over residues 1–10 the composition is skewed to pro residues; it reads MSDQPPPYTP. Positions 1-79 are disordered; the sequence is MSDQPPPYTP…PSAQPPPRAS (79 aa). Basic residues predominate over residues 44–55; that stretch reads NKRKRTGFRRKL. Low complexity predominate over residues 56-71; that stretch reads PSGSPAAPVAVAASPS. Residues 88-189 form the SWIRM domain; that stretch reads NREPTAEAVT…FGVAPAIKER (102 aa). 4 residues coordinate FAD: Glu227, Arg229, Arg235, and Glu609. A disordered region spans residues 790–811; the sequence is RNSSRTKTRPSKLKIGIPKSKS.

It belongs to the flavin monoamine oxidase family. FAD serves as cofactor.

Probable histone demethylase. The sequence is that of Lysine-specific histone demethylase 1 homolog 3 from Oryza sativa subsp. indica (Rice).